The sequence spans 222 residues: Leucyl/phenylalanyl-tRNA--protein transferase (222 aa).

This sequence belongs to the L/F-transferase family.

It localises to the cytoplasm. It carries out the reaction N-terminal L-lysyl-[protein] + L-leucyl-tRNA(Leu) = N-terminal L-leucyl-L-lysyl-[protein] + tRNA(Leu) + H(+). It catalyses the reaction N-terminal L-arginyl-[protein] + L-leucyl-tRNA(Leu) = N-terminal L-leucyl-L-arginyl-[protein] + tRNA(Leu) + H(+). The enzyme catalyses L-phenylalanyl-tRNA(Phe) + an N-terminal L-alpha-aminoacyl-[protein] = an N-terminal L-phenylalanyl-L-alpha-aminoacyl-[protein] + tRNA(Phe). Its function is as follows. Functions in the N-end rule pathway of protein degradation where it conjugates Leu, Phe and, less efficiently, Met from aminoacyl-tRNAs to the N-termini of proteins containing an N-terminal arginine or lysine. The chain is Leucyl/phenylalanyl-tRNA--protein transferase from Legionella pneumophila (strain Lens).